A 549-amino-acid chain; its full sequence is Putative lipase ATG15 (549 aa).

The Cytoplasmic segment spans residues 1–19 (MKQDLYKESSPPPSTTKSK). Residues 20–42 (GLYVIVAALVTTAIYLLYSQGYS) form a helical; Signal-anchor for type II membrane protein membrane-spanning segment. At 43–549 (NTHGEKDMPS…SHTVTHVTMA (507 aa)) the chain is on the lumenal side. Residues Asn-204 and Asn-315 are each glycosylated (N-linked (GlcNAc...) asparagine). Ser-331 (charge relay system) is an active-site residue. The N-linked (GlcNAc...) asparagine glycan is linked to Asn-448. Residues 474–510 (DDDDKDKKKKKKTSTSSSVVSKTKTSTSSTVATNTMP) are disordered. A compositionally biased stretch (low complexity) spans 487–504 (STSSSVVSKTKTSTSSTV).

Belongs to the AB hydrolase superfamily. Lipase family. As to quaternary structure, binds to both phosphatidylinositol (PI) and phosphatidylinositol 3,5-bisphosphate (PIP2).

The protein resides in the endosome. It localises to the multivesicular body membrane. It is found in the prevacuolar compartment membrane. The enzyme catalyses a triacylglycerol + H2O = a diacylglycerol + a fatty acid + H(+). In terms of biological role, lipase which is essential for lysis of subvacuolar cytoplasm to vacuole targeted bodies and intravacuolar autophagic bodies. Involved in the lysis of intravacuolar multivesicular body (MVB) vesicles. The intravacuolar membrane disintegration by ATG15 is critical to life span extension. This Yarrowia lipolytica (strain CLIB 122 / E 150) (Yeast) protein is Putative lipase ATG15 (ATG15).